Here is a 202-residue protein sequence, read N- to C-terminus: Orotate phosphoribosyltransferase (202 aa).

Residues K93 and 113-121 each bind 5-phospho-alpha-D-ribose 1-diphosphate; that span reads EDIITTGGS. Orotate contacts are provided by T117 and R145.

The protein belongs to the purine/pyrimidine phosphoribosyltransferase family. PyrE subfamily. In terms of assembly, homodimer. The cofactor is Mg(2+).

It catalyses the reaction orotidine 5'-phosphate + diphosphate = orotate + 5-phospho-alpha-D-ribose 1-diphosphate. It participates in pyrimidine metabolism; UMP biosynthesis via de novo pathway; UMP from orotate: step 1/2. Functionally, catalyzes the transfer of a ribosyl phosphate group from 5-phosphoribose 1-diphosphate to orotate, leading to the formation of orotidine monophosphate (OMP). This is Orotate phosphoribosyltransferase from Campylobacter concisus (strain 13826).